The sequence spans 297 residues: 4-hydroxy-tetrahydrodipicolinate synthase (297 aa).

T45 contributes to the pyruvate binding site. Y133 acts as the Proton donor/acceptor in catalysis. Catalysis depends on K161, which acts as the Schiff-base intermediate with substrate. I205 contacts pyruvate.

Belongs to the DapA family. In terms of assembly, homotetramer; dimer of dimers.

The protein resides in the cytoplasm. It catalyses the reaction L-aspartate 4-semialdehyde + pyruvate = (2S,4S)-4-hydroxy-2,3,4,5-tetrahydrodipicolinate + H2O + H(+). The protein operates within amino-acid biosynthesis; L-lysine biosynthesis via DAP pathway; (S)-tetrahydrodipicolinate from L-aspartate: step 3/4. Functionally, catalyzes the condensation of (S)-aspartate-beta-semialdehyde [(S)-ASA] and pyruvate to 4-hydroxy-tetrahydrodipicolinate (HTPA). The polypeptide is 4-hydroxy-tetrahydrodipicolinate synthase (Dichelobacter nodosus (strain VCS1703A)).